We begin with the raw amino-acid sequence, 485 residues long: Keratin, type I cytoskeletal 14 (485 aa).

A compositionally biased stretch (polar residues) spans 1–15 (MATCSRQFTSSSSMK). The segment at 1–21 (MATCSRQFTSSSSMKGSCGIG) is disordered. The tract at residues 1–121 (MATCSRQFTS…GLGDGLLVGS (121 aa)) is head. The segment at 122-157 (EKVTMQNLNDRLATYLDKVRALEEANSDLEVKIRDW) is coil 1A. An IF rod domain is found at 122–433 (EKVTMQNLND…RLLEGEDAHL (312 aa)). The segment at 158-175 (YQRQRPTEIKDYSPYFKT) is linker 1. The tract at residues 176-267 (IEDLKSKILA…KNHEEEMASM (92 aa)) is coil 1B. Residues 268-290 (RGQVGGDVNVEMDAAPGVDLSRI) form a linker 12 region. Residues 291-429 (LNEMRDQYEK…ATYRRLLEGE (139 aa)) form a coil 2 region. A tail region spans residues 430 to 485 (DAHLSSAQFSSSSQFSSGSQSSRDVTSTNRQIRTKVMDVHDGKVVSTHEQVLRTKN). The segment at 432–485 (HLSSAQFSSSSQFSSGSQSSRDVTSTNRQIRTKVMDVHDGKVVSTHEQVLRTKN) is interaction with Type I keratins and keratin filaments. Low complexity predominate over residues 437–451 (QFSSSSQFSSGSQSS). Residues 437 to 458 (QFSSSSQFSSGSQSSRDVTSTN) are disordered. Serine 448 carries the post-translational modification Phosphoserine.

It belongs to the intermediate filament family. Heterotetramer of two type I and two type II keratins. Forms a disulfide-linked heterodimer (via 2B domains) with KRT5 (via 2B domains). Forms a heterodimer with KRT1; the interaction is more abundant in the absence of KRT5. Interacts with TRADD and with keratin filaments. Associates with other type I keratins. Interacts with EPPK1. Interacts with KLHL24. Interacts with PKP1 (via N-terminus) and PKP2. In terms of processing, a disulfide bond is formed between rather than within filaments and promotes the formation of a keratin filament cage around the nucleus. Ubiquitinated by the BCR(KLHL24) E3 ubiquitin ligase complex. Expressed in most cells of squamous cell carcinomas, in spinous and suprabasal cells around the branching papillary region of papillomas, and weakly in a few proliferative cells of hyperplastic tissue.

Its subcellular location is the cytoplasm. It localises to the nucleus. Its function is as follows. The nonhelical tail domain is involved in promoting KRT5-KRT14 filaments to self-organize into large bundles and enhances the mechanical properties involved in resilience of keratin intermediate filaments in vitro. In Rattus norvegicus (Rat), this protein is Keratin, type I cytoskeletal 14 (Krt14).